The sequence spans 180 residues: Negative modulator of initiation of replication (180 aa).

Residues 115–119 are interaction with DNA; the sequence is RTRVY.

It belongs to the SeqA family. As to quaternary structure, homodimer. Polymerizes to form helical filaments.

It is found in the cytoplasm. In terms of biological role, negative regulator of replication initiation, which contributes to regulation of DNA replication and ensures that replication initiation occurs exactly once per chromosome per cell cycle. Binds to pairs of hemimethylated GATC sequences in the oriC region, thus preventing assembly of replication proteins and re-initiation at newly replicated origins. Repression is relieved when the region becomes fully methylated. This is Negative modulator of initiation of replication from Aliivibrio fischeri (strain ATCC 700601 / ES114) (Vibrio fischeri).